Here is a 428-residue protein sequence, read N- to C-terminus: GTPase Obg (428 aa).

The Obg domain occupies 1–158 (MFVDQVQVEV…RFIKLELKVL (158 aa)). One can recognise an OBG-type G domain in the interval 159-333 (ADVGLVGFPS…LMHKTAEVLK (175 aa)). GTP contacts are provided by residues 165–172 (GFPSVGKS), 190–194 (FTTLV), 212–215 (DLPG), 282–285 (TKMD), and 314–316 (SSL). Positions 172 and 192 each coordinate Mg(2+). The 79-residue stretch at 350 to 428 (YKYQPEPALK…IDDFTFEFVE (79 aa)) folds into the OCT domain.

It belongs to the TRAFAC class OBG-HflX-like GTPase superfamily. OBG GTPase family. As to quaternary structure, monomer. Mg(2+) is required as a cofactor.

The protein localises to the cytoplasm. Its function is as follows. An essential GTPase which binds GTP, GDP and possibly (p)ppGpp with moderate affinity, with high nucleotide exchange rates and a fairly low GTP hydrolysis rate. Plays a role in control of the cell cycle, stress response, ribosome biogenesis and in those bacteria that undergo differentiation, in morphogenesis control. The sequence is that of GTPase Obg from Lacticaseibacillus paracasei (strain ATCC 334 / BCRC 17002 / CCUG 31169 / CIP 107868 / KCTC 3260 / NRRL B-441) (Lactobacillus paracasei).